Here is a 202-residue protein sequence, read N- to C-terminus: Lipoprotein signal peptidase (202 aa).

A disordered region spans residues 1-29; that stretch reads MPDEPTGSADPLTSTEEAGGAGEPNAPAP. The next 3 membrane-spanning stretches (helical) occupy residues 35 to 55, 88 to 108, and 112 to 132; these read MLLSVAVVVLTLDIVTKVVAV, GYTWVLTLIATGVVVGIFWMG, and VSPWWALGLGMILGGAMGNLV. Active-site residues include Asp-148 and Asp-162. A helical membrane pass occupies residues 160 to 180; sequence VADPSVVGGAILLVILSIFGF.

The protein belongs to the peptidase A8 family.

The protein resides in the cell membrane. It carries out the reaction Release of signal peptides from bacterial membrane prolipoproteins. Hydrolyzes -Xaa-Yaa-Zaa-|-(S,diacylglyceryl)Cys-, in which Xaa is hydrophobic (preferably Leu), and Yaa (Ala or Ser) and Zaa (Gly or Ala) have small, neutral side chains.. It functions in the pathway protein modification; lipoprotein biosynthesis (signal peptide cleavage). Its function is as follows. This protein specifically catalyzes the removal of signal peptides from prolipoproteins. The chain is Lipoprotein signal peptidase from Mycobacterium bovis (strain ATCC BAA-935 / AF2122/97).